Reading from the N-terminus, the 88-residue chain is Small ribosomal subunit protein uS15 (88 aa).

Belongs to the universal ribosomal protein uS15 family. As to quaternary structure, part of the 30S ribosomal subunit. Forms a bridge to the 50S subunit in the 70S ribosome, contacting the 23S rRNA.

Its function is as follows. One of the primary rRNA binding proteins, it binds directly to 16S rRNA where it helps nucleate assembly of the platform of the 30S subunit by binding and bridging several RNA helices of the 16S rRNA. Forms an intersubunit bridge (bridge B4) with the 23S rRNA of the 50S subunit in the ribosome. The protein is Small ribosomal subunit protein uS15 of Mesomycoplasma hyopneumoniae (strain 232) (Mycoplasma hyopneumoniae).